Reading from the N-terminus, the 429-residue chain is Probable M18 family aminopeptidase 2 (429 aa).

Histidine 82, histidine 156, and histidine 401 together coordinate Zn(2+).

It belongs to the peptidase M18 family. Zn(2+) is required as a cofactor.

The chain is Probable M18 family aminopeptidase 2 from Pseudomonas putida (strain ATCC 47054 / DSM 6125 / CFBP 8728 / NCIMB 11950 / KT2440).